A 372-amino-acid polypeptide reads, in one-letter code: Glutamate 5-kinase (372 aa).

Lys14 contacts ATP. Residues Ser54, Asp141, and Asn153 each coordinate substrate. Residue 173–174 (TD) coordinates ATP. The region spanning 280-358 (RGNVTLDEGA…DEIESLLGYI (79 aa)) is the PUA domain.

This sequence belongs to the glutamate 5-kinase family.

The protein localises to the cytoplasm. The catalysed reaction is L-glutamate + ATP = L-glutamyl 5-phosphate + ADP. It participates in amino-acid biosynthesis; L-proline biosynthesis; L-glutamate 5-semialdehyde from L-glutamate: step 1/2. Catalyzes the transfer of a phosphate group to glutamate to form L-glutamate 5-phosphate. In Nitrosospira multiformis (strain ATCC 25196 / NCIMB 11849 / C 71), this protein is Glutamate 5-kinase.